The chain runs to 160 residues: 6,7-dimethyl-8-ribityllumazine synthase (160 aa).

5-amino-6-(D-ribitylamino)uracil is bound by residues W28, S59–E61, and V82–I84. Position 87-88 (G87–T88) interacts with (2S)-2-hydroxy-3-oxobutyl phosphate. The active-site Proton donor is the H90. F115 lines the 5-amino-6-(D-ribitylamino)uracil pocket. R129 provides a ligand contact to (2S)-2-hydroxy-3-oxobutyl phosphate.

The protein belongs to the DMRL synthase family.

It carries out the reaction (2S)-2-hydroxy-3-oxobutyl phosphate + 5-amino-6-(D-ribitylamino)uracil = 6,7-dimethyl-8-(1-D-ribityl)lumazine + phosphate + 2 H2O + H(+). It functions in the pathway cofactor biosynthesis; riboflavin biosynthesis; riboflavin from 2-hydroxy-3-oxobutyl phosphate and 5-amino-6-(D-ribitylamino)uracil: step 1/2. Catalyzes the formation of 6,7-dimethyl-8-ribityllumazine by condensation of 5-amino-6-(D-ribitylamino)uracil with 3,4-dihydroxy-2-butanone 4-phosphate. This is the penultimate step in the biosynthesis of riboflavin. The polypeptide is 6,7-dimethyl-8-ribityllumazine synthase (Clavibacter sepedonicus (Clavibacter michiganensis subsp. sepedonicus)).